The chain runs to 394 residues: Phosphoglycerate kinase (394 aa).

Substrate contacts are provided by residues Asp21–Asn23, Arg36, His59–Arg62, Arg118, and Arg151. Ser183 carries the post-translational modification Phosphoserine. ATP is bound by residues Lys201 and Gly292. Thr299 carries the post-translational modification Phosphothreonine. ATP-binding positions include Glu323 and Gly350 to Ser353.

Belongs to the phosphoglycerate kinase family. In terms of assembly, monomer.

The protein resides in the cytoplasm. It catalyses the reaction (2R)-3-phosphoglycerate + ATP = (2R)-3-phospho-glyceroyl phosphate + ADP. It functions in the pathway carbohydrate degradation; glycolysis; pyruvate from D-glyceraldehyde 3-phosphate: step 2/5. The protein is Phosphoglycerate kinase of Bacillus anthracis (strain A0248).